Reading from the N-terminus, the 60-residue chain is Large ribosomal subunit protein uL30 (60 aa).

It belongs to the universal ribosomal protein uL30 family. In terms of assembly, part of the 50S ribosomal subunit.

The protein is Large ribosomal subunit protein uL30 of Streptococcus pneumoniae (strain Hungary19A-6).